The chain runs to 901 residues: HTH-type transcriptional regulator MalT (901 aa).

39 to 46 serves as a coordination point for ATP; the sequence is SPAGYGKT. The HTH luxR-type domain occupies 829–894; sequence ELIRTSPLTQ…DAVQHAQQLL (66 aa). The H-T-H motif DNA-binding region spans 853 to 872; it reads NEQIAGELEVAATTIKTHIR.

This sequence belongs to the MalT family. As to quaternary structure, monomer in solution. Oligomerizes to an active state in the presence of the positive effectors ATP and maltotriose.

Its activity is regulated as follows. Activated by ATP and maltotriose, which are both required for DNA binding. Its function is as follows. Positively regulates the transcription of the maltose regulon whose gene products are responsible for uptake and catabolism of malto-oligosaccharides. Specifically binds to the promoter region of its target genes, recognizing a short DNA motif called the MalT box. The chain is HTH-type transcriptional regulator MalT from Escherichia coli (strain K12 / MC4100 / BW2952).